Here is a 927-residue protein sequence, read N- to C-terminus: Sodium/calcium exchanger 3 (927 aa).

The signal sequence occupies residues 1–30 (MAWLRLQPLTSAFLHFGLVTFVLFLNGLRA). The Extracellular segment spans residues 31-73 (EAGDLRDVPSAGQNNESCSGSSDCKEGVILPIWYPENPSLGDK). The N-linked (GlcNAc...) asparagine glycan is linked to Asn45. A helical transmembrane segment spans residues 74-94 (IARVIVYFVALIYMFLGVSII). Topologically, residues 95–147 (ADRFMASIEVITSQEREVTIKKPNGETSTTTIRVWNETVSNLTLMALGSSAPE) are cytoplasmic. The stretch at 140–180 (ALGSSAPEILLSLIEVCGHGFIAGDLGPSTIVGSAAFNMFI) is one Alpha-1 repeat. Residues 148 to 168 (ILLSLIEVCGHGFIAGDLGPS) traverse the membrane as a helical segment. Thr169 is a topological domain (extracellular). A helical transmembrane segment spans residues 170–190 (IVGSAAFNMFIIIGICVYVIP). Residues 191–202 (DGETRKIKHLRV) are Cytoplasmic-facing. Residues 203 to 223 (FFVTAAWSVFAYIWLYMILAV) form a helical membrane-spanning segment. Over 224-230 (FSPGVVQ) the chain is Extracellular. A helical transmembrane segment spans residues 231-251 (VWEGLLTLFFFPVCVLLAWVA). Residues 252–726 (DKRLLFYKYM…DESGEERLPS (475 aa)) are Cytoplasmic-facing. The interval 253 to 272 (KRLLFYKYMHKRYRTDKHRG) is putative calmodulin-binding region. 2 Calx-beta domains span residues 386–485 (VHTD…VRLS) and 519–619 (ATVT…IALG). Ca(2+) is bound by residues Glu409, Asp445, Asp470, Asp471, Ile473, Glu475, Glu478, Asp525, Asp526, Asp527, Glu543, Asp579, Glu606, Glu607, and Glu672. Residues 727 to 747 (CFDYVMHFLTVFWKVLFACVP) form a helical membrane-spanning segment. Topologically, residues 748 to 754 (PTEYCHG) are extracellular. A helical membrane pass occupies residues 755 to 775 (WACFVVSILIIGMLTAIIGDL). The Cytoplasmic segment spans residues 776–778 (ASH). A helical transmembrane segment spans residues 779 to 799 (FGCTIGLKDSVTAVVFVAFGT). Residues 796 to 832 (AFGTSVPDTFASKAAALQDVYADASIGNVTGSNAVNV) form an Alpha-2 repeat. Over 800–828 (SVPDTFASKAAALQDVYADASIGNVTGSN) the chain is Extracellular. Residue Asn823 is glycosylated (N-linked (GlcNAc...) asparagine). The chain crosses the membrane as a helical span at residues 829–849 (AVNVFLGIGLAWSVAAIYWAM). Topologically, residues 850–860 (QGQEFHVSAGT) are cytoplasmic. A helical transmembrane segment spans residues 861–881 (LAFSVTLFTIFAFVCLSVLLY). Over 882-903 (RRRPHLGGELGGPRGCKLATTW) the chain is Extracellular. A helical transmembrane segment spans residues 904–924 (LFVSLWLLYVLFATLEAYCYI). The Cytoplasmic segment spans residues 925–927 (KGF).

It belongs to the Ca(2+):cation antiporter (CaCA) (TC 2.A.19) family. SLC8 subfamily. Interacts with AKAP1. Detected in neurons in brain cortex and hippocampus. Detected in pyramidal cell bodies and processes, in granule cells and interneurons in the CA1 and CA3 region of the hippocampus. Detected on astrocyte processes in brain cortex. Detected on endothelial cells in hippocampus capillaries (at protein level). Restricted to brain and skeletal muscle.

It is found in the cell membrane. The protein resides in the perikaryon. Its subcellular location is the cell projection. The protein localises to the dendrite. It localises to the dendritic spine. It is found in the sarcolemma. The protein resides in the cytoplasm. Its subcellular location is the sarcoplasm. The protein localises to the cell junction. It localises to the mitochondrion outer membrane. It is found in the endoplasmic reticulum membrane. The protein resides in the perinuclear region. The catalysed reaction is Ca(2+)(in) + 3 Na(+)(out) = Ca(2+)(out) + 3 Na(+)(in). Its activity is regulated as follows. Calcium transport is down-regulated by Na(+) and stimulated by Ca(2+). Mediates the electrogenic exchange of Ca(2+) against Na(+) ions across the cell membrane, and thereby contributes to the regulation of cytoplasmic Ca(2+) levels and Ca(2+)-dependent cellular processes. Contributes to cellular Ca(2+) homeostasis in excitable cells, both in muscle and in brain. In a first phase, voltage-gated channels mediate the rapid increase of cytoplasmic Ca(2+) levels due to release of Ca(2+) stores from the endoplasmic reticulum. SLC8A3 mediates the export of Ca(2+) from the cell during the next phase, so that cytoplasmic Ca(2+) levels rapidly return to baseline. Contributes to Ca(2+) transport during excitation-contraction coupling in muscle. In neurons, contributes to the rapid decrease of cytoplasmic Ca(2+) levels back to baseline after neuronal activation, and thereby contributes to modulate synaptic plasticity, learning and memory. Required for normal oligodendrocyte differentiation and for normal myelination. Mediates Ca(2+) efflux from mitochondria and contributes to mitochondrial Ca(2+) ion homeostasis. The chain is Sodium/calcium exchanger 3 (Slc8a3) from Rattus norvegicus (Rat).